The following is a 149-amino-acid chain: Large ribosomal subunit protein uL13 (149 aa).

Belongs to the universal ribosomal protein uL13 family. In terms of assembly, part of the 50S ribosomal subunit.

Functionally, this protein is one of the early assembly proteins of the 50S ribosomal subunit, although it is not seen to bind rRNA by itself. It is important during the early stages of 50S assembly. This Chlorobium limicola (strain DSM 245 / NBRC 103803 / 6330) protein is Large ribosomal subunit protein uL13.